The chain runs to 196 residues: dITP/XTP pyrophosphatase (196 aa).

Position 10–15 (10–15 (SGNKGK)) interacts with substrate. Mg(2+)-binding residues include Glu-40 and Asp-69. Asp-69 functions as the Proton acceptor in the catalytic mechanism. Substrate contacts are provided by residues Ser-70, 147–150 (FGYD), Lys-170, and 175–176 (HR).

This sequence belongs to the HAM1 NTPase family. In terms of assembly, homodimer. Mg(2+) is required as a cofactor.

The catalysed reaction is XTP + H2O = XMP + diphosphate + H(+). It carries out the reaction dITP + H2O = dIMP + diphosphate + H(+). The enzyme catalyses ITP + H2O = IMP + diphosphate + H(+). Its function is as follows. Pyrophosphatase that catalyzes the hydrolysis of nucleoside triphosphates to their monophosphate derivatives, with a high preference for the non-canonical purine nucleotides XTP (xanthosine triphosphate), dITP (deoxyinosine triphosphate) and ITP. Seems to function as a house-cleaning enzyme that removes non-canonical purine nucleotides from the nucleotide pool, thus preventing their incorporation into DNA/RNA and avoiding chromosomal lesions. This chain is dITP/XTP pyrophosphatase, found in Prochlorococcus marinus (strain NATL1A).